Here is a 200-residue protein sequence, read N- to C-terminus: Small ribosomal subunit protein uS4 (200 aa).

Residues 92 to 155 (SRLDAVVYSL…QKLNIIVESV (64 aa)) enclose the S4 RNA-binding domain.

Belongs to the universal ribosomal protein uS4 family. Part of the 30S ribosomal subunit. Contacts protein S5. The interaction surface between S4 and S5 is involved in control of translational fidelity.

One of the primary rRNA binding proteins, it binds directly to 16S rRNA where it nucleates assembly of the body of the 30S subunit. Functionally, with S5 and S12 plays an important role in translational accuracy. In Staphylococcus aureus (strain JH9), this protein is Small ribosomal subunit protein uS4.